A 211-amino-acid chain; its full sequence is N,O-diacetylmuramidase (211 aa).

Active-site residues include aspartate 6 and glutamate 100. A disulfide bond links cysteine 108 and cysteine 147.

The protein belongs to the glycosyl hydrolase 25 family.

It localises to the secreted. Its subcellular location is the extracellular space. It catalyses the reaction Hydrolysis of (1-&gt;4)-beta-linkages between N-acetylmuramic acid and N-acetyl-D-glucosamine residues in a peptidoglycan and between N-acetyl-D-glucosamine residues in chitodextrins.. In terms of biological role, this enzyme has both lysozyme (acetylmuramidase) and diacetylmuramidase activities. This chain is N,O-diacetylmuramidase, found in Chalaropsis sp.